The primary structure comprises 1027 residues: Kinesin heavy chain isoform 5A (1027 aa).

N-acetylalanine is present on A2. The region spanning 9 to 327 is the Kinesin motor domain; the sequence is SIKVLCRFRP…LMFGQRAKTI (319 aa). 86-93 contributes to the ATP binding site; that stretch reads GQTSSGKT. The tract at residues 174–315 is microtubule-binding; sequence VSSPEEILDV…PSSYNDAETK (142 aa). The tract at residues 271 to 361 is necessary for interaction with ZFYVE27; the sequence is EGTKSYVPYR…KTKAQKETIA (91 aa). The stretch at 331–905 forms a coiled coil; it reads ASVNLELTAE…EVDRIKEAVR (575 aa). Residues 353 to 1027 are interaction with BICD2; it reads TKAQKETIAK…FPLHQETAAS (675 aa). T397 carries the post-translational modification Phosphothreonine. The interval 906 to 936 is disordered; that stretch reads YKSSGKRGHSAQIAKPVRPGHYPASSPTNPY. The segment at 907–1027 is globular; that stretch reads KSSGKRGHSA…FPLHQETAAS (121 aa).

This sequence belongs to the TRAFAC class myosin-kinesin ATPase superfamily. Kinesin family. Kinesin subfamily. Oligomer composed of two heavy chains and two light chains. Interacts with GRIP1. Interacts with FMR1 (via C-terminus); this interaction is increased in a mGluR-dependent manner. Interacts with BORCS5. Interacts with ZFYVE27. Interacts with VAPA, VAPB, SURF4, RAB11A (GDP-bound form), RAB11B (GDP-bound form) and RTN3 in a ZFYVE27-dependent manner. Interacts with BICD2. Interacts with DTNB. In terms of tissue distribution, expressed in brain.

The protein localises to the cytoplasm. Its subcellular location is the perinuclear region. It localises to the cytoskeleton. It is found in the perikaryon. It catalyses the reaction ATP + H2O + a kinesin associated with a microtubule at position (n) = ADP + phosphate a kinesin associated with a microtubule at position (n+1, toward the plus end).. In terms of biological role, microtubule-dependent motor required for slow axonal transport of neurofilament proteins (NFH, NFM and NFL). Can induce formation of neurite-like membrane protrusions in non-neuronal cells in a ZFYVE27-dependent manner. The ZFYVE27-KIF5A complex contributes to the vesicular transport of VAPA, VAPB, SURF4, RAB11A, RAB11B and RTN3 proteins in neurons. Required for anterograde axonal transportation of MAPK8IP3/JIP3 which is essential for MAPK8IP3/JIP3 function in axon elongation. This chain is Kinesin heavy chain isoform 5A, found in Rattus norvegicus (Rat).